The chain runs to 89 residues: Small ribosomal subunit protein uS15 (89 aa).

The protein belongs to the universal ribosomal protein uS15 family. Part of the 30S ribosomal subunit. Forms a bridge to the 50S subunit in the 70S ribosome, contacting the 23S rRNA.

Its function is as follows. One of the primary rRNA binding proteins, it binds directly to 16S rRNA where it helps nucleate assembly of the platform of the 30S subunit by binding and bridging several RNA helices of the 16S rRNA. Forms an intersubunit bridge (bridge B4) with the 23S rRNA of the 50S subunit in the ribosome. This chain is Small ribosomal subunit protein uS15, found in Actinobacillus pleuropneumoniae serotype 5b (strain L20).